Here is a 205-residue protein sequence, read N- to C-terminus: Dr1-associated corepressor (205 aa).

The region spanning 14–77 is the Histone-fold domain; sequence PARIKKIMQT…SHLKQCIELE (64 aa). Residues 91–205 are disordered; sequence PDMQGDGEDN…EAEDEEDYDS (115 aa). Residues 98-108 show a composition bias toward basic and acidic residues; it reads EDNHTDGDKGP. Acidic residues predominate over residues 138–155; sequence SEQEDESEDTDTDGEEET. Residues 172 to 193 show a composition bias toward pro residues; it reads PPTPFMPFTSPLPLPPAPPGPS. Residues 196–205 are compositionally biased toward acidic residues; it reads EAEDEEDYDS.

Belongs to the NC2 alpha/DRAP1 family. Heterodimer with DR1. Binds BTAF1. Phosphorylation reduces DNA binding, but has no effect on heterodimerization and TBP binding.

The protein resides in the nucleus. Its function is as follows. The association of the DR1/DRAP1 heterodimer with TBP results in a functional repression of both activated and basal transcription of class II genes. This interaction precludes the formation of a transcription-competent complex by inhibiting the association of TFIIA and/or TFIIB with TBP. Can bind to DNA on its own. This Rattus norvegicus (Rat) protein is Dr1-associated corepressor.